Reading from the N-terminus, the 163-residue chain is Ribosome maturation factor RimP (163 aa).

Positions 66–85 are disordered; the sequence is ALDRDDPVPGPPYELEVSSP.

It belongs to the RimP family.

The protein localises to the cytoplasm. In terms of biological role, required for maturation of 30S ribosomal subunits. The polypeptide is Ribosome maturation factor RimP (Kocuria rhizophila (strain ATCC 9341 / DSM 348 / NBRC 103217 / DC2201)).